Here is a 156-residue protein sequence, read N- to C-terminus: 3-hydroxyacyl-[acyl-carrier-protein] dehydratase FabZ (156 aa).

Residue H61 is part of the active site.

This sequence belongs to the thioester dehydratase family. FabZ subfamily.

The protein resides in the cytoplasm. It catalyses the reaction a (3R)-hydroxyacyl-[ACP] = a (2E)-enoyl-[ACP] + H2O. In terms of biological role, involved in unsaturated fatty acids biosynthesis. Catalyzes the dehydration of short chain beta-hydroxyacyl-ACPs and long chain saturated and unsaturated beta-hydroxyacyl-ACPs. This Acaryochloris marina (strain MBIC 11017) protein is 3-hydroxyacyl-[acyl-carrier-protein] dehydratase FabZ.